Reading from the N-terminus, the 200-residue chain is Holliday junction branch migration complex subunit RuvA (200 aa).

Residues 1–63 are domain I; it reads MYAYVKGKLT…EDAQLLYGFS (63 aa). The tract at residues 64 to 142 is domain II; it reads SEEEKDMFLS…ITEEDSDSLL (79 aa). The interval 143–149 is flexible linker; that stretch reads QVDATST. Positions 150 to 200 are domain III; the sequence is EQDQFVQEAMLALEALGYSKRELAKVEKTLNKNKYDSVDEAVKAGLQLVVS.

This sequence belongs to the RuvA family. Homotetramer. Forms an RuvA(8)-RuvB(12)-Holliday junction (HJ) complex. HJ DNA is sandwiched between 2 RuvA tetramers; dsDNA enters through RuvA and exits via RuvB. An RuvB hexamer assembles on each DNA strand where it exits the tetramer. Each RuvB hexamer is contacted by two RuvA subunits (via domain III) on 2 adjacent RuvB subunits; this complex drives branch migration. In the full resolvosome a probable DNA-RuvA(4)-RuvB(12)-RuvC(2) complex forms which resolves the HJ.

The protein localises to the cytoplasm. Its function is as follows. The RuvA-RuvB-RuvC complex processes Holliday junction (HJ) DNA during genetic recombination and DNA repair, while the RuvA-RuvB complex plays an important role in the rescue of blocked DNA replication forks via replication fork reversal (RFR). RuvA specifically binds to HJ cruciform DNA, conferring on it an open structure. The RuvB hexamer acts as an ATP-dependent pump, pulling dsDNA into and through the RuvAB complex. HJ branch migration allows RuvC to scan DNA until it finds its consensus sequence, where it cleaves and resolves the cruciform DNA. The polypeptide is Holliday junction branch migration complex subunit RuvA (Staphylococcus aureus (strain MRSA252)).